The sequence spans 226 residues: N-(5'-phosphoribosyl)anthranilate isomerase (226 aa).

This sequence belongs to the TrpF family.

It catalyses the reaction N-(5-phospho-beta-D-ribosyl)anthranilate = 1-(2-carboxyphenylamino)-1-deoxy-D-ribulose 5-phosphate. It participates in amino-acid biosynthesis; L-tryptophan biosynthesis; L-tryptophan from chorismate: step 3/5. The polypeptide is N-(5'-phosphoribosyl)anthranilate isomerase (Synechococcus sp. (strain JA-3-3Ab) (Cyanobacteria bacterium Yellowstone A-Prime)).